Reading from the N-terminus, the 139-residue chain is Gonadotropin subunit beta-2 (139 aa).

The first 24 residues, 1–24, serve as a signal peptide directing secretion; the sequence is MFPLVLSLFLGATSDIWPLAPAEA. Cystine bridges form between cysteine 30/cysteine 78, cysteine 44/cysteine 93, cysteine 47/cysteine 131, cysteine 55/cysteine 109, cysteine 59/cysteine 111, and cysteine 114/cysteine 121. A glycan (N-linked (GlcNAc...) asparagine) is linked at asparagine 34.

The protein belongs to the glycoprotein hormones subunit beta family. In terms of assembly, heterodimer of an alpha and a beta chain.

It is found in the secreted. Involved in gametogenesis and steroidogenesis. This chain is Gonadotropin subunit beta-2 (cgbb), found in Morone saxatilis (Striped bass).